A 100-amino-acid polypeptide reads, in one-letter code: Aspartyl/glutamyl-tRNA(Asn/Gln) amidotransferase subunit C (100 aa).

It belongs to the GatC family. In terms of assembly, heterotrimer of A, B and C subunits.

It carries out the reaction L-glutamyl-tRNA(Gln) + L-glutamine + ATP + H2O = L-glutaminyl-tRNA(Gln) + L-glutamate + ADP + phosphate + H(+). It catalyses the reaction L-aspartyl-tRNA(Asn) + L-glutamine + ATP + H2O = L-asparaginyl-tRNA(Asn) + L-glutamate + ADP + phosphate + 2 H(+). Its function is as follows. Allows the formation of correctly charged Asn-tRNA(Asn) or Gln-tRNA(Gln) through the transamidation of misacylated Asp-tRNA(Asn) or Glu-tRNA(Gln) in organisms which lack either or both of asparaginyl-tRNA or glutaminyl-tRNA synthetases. The reaction takes place in the presence of glutamine and ATP through an activated phospho-Asp-tRNA(Asn) or phospho-Glu-tRNA(Gln). The polypeptide is Aspartyl/glutamyl-tRNA(Asn/Gln) amidotransferase subunit C (Streptococcus pyogenes serotype M49 (strain NZ131)).